The primary structure comprises 639 residues: MFSKKKKKPLISMPSNFEHRVHTGFDKRENKYVGLPLQWASIVGNNQILKSSNRPLPLVDPSEITPTEILDLKTIVRPHHNNNKADTTSLNSSSTMMMGSMAPMNPMAPGAHPMMSHGPGMMMPPETGGIVLPKTSHVARSNSLRSSSPPRVRRVANVPPSVPEEEGPPAAGTPGVGGASSGGFKPPGAHPSLLYNSQHAHANGATGPLAVRTDQTNLQQYRSNLAPPSGGSMPQQQQTSPVGSVASGTRSNHSHTNNGNSGGSYPPMYPTSHQQQQQQQQQAKQGGDQNQNPLHPHAHPHPHHHQHLAKSASRASSSSGGASSAAQQASGASGGAAGQPKQDQRLTHEQFRAALQMVVSAGDPRENLDHFNKIGEGSTGTVCIATDKSTGRQVAVKKMDLRKQQRRELLFNEVVIMRDYHHPNIVETYSSFLVNDELWVVMEYLEGGALTDIVTHSRMDEEQIATVCKQCLKALAYLHSQGVIHRDIKSDSILLAADGRVKLSDFGFCAQVSQELPKRKSLVGTPYWMSPEVISRLPYGPEVDIWSLGIMVIEMVDGEPPFFNEPPLQAMRRIRDMQPPNLKNAHKVSPRLQSFLDRMLVRDPAQRATAAELLAHPFLRQAGPPSLLVPLMRNARHHP.

The region spanning 11–24 (ISMPSNFEHRVHTG) is the CRIB domain. The linker stretch occupies residues 25–367 (FDKRENKYVG…VVSAGDPREN (343 aa)). Disordered stretches follow at residues 79 to 195 (HHNN…SLLY) and 222 to 345 (RSNL…QDQR). Composition is skewed to low complexity over residues 91 to 129 (NSSS…ETGG), 138 to 159 (VARS…ANVP), 227 to 241 (PPSG…QTSP), and 274 to 295 (QQQQ…NPLH). The span at 296–308 (PHAHPHPHHHQHL) shows a compositional bias: basic residues. Low complexity predominate over residues 309–331 (AKSASRASSSSGGASSAAQQASG). Residues 368-619 (LDHFNKIGEG…AAELLAHPFL (252 aa)) form the Protein kinase domain. Residues 374 to 382 (IGEGSTGTV) and K397 contribute to the ATP site. D487 (proton acceptor) is an active-site residue. Phosphoserine is present on S521. A Phosphothreonine modification is found at T525.

The protein belongs to the protein kinase superfamily. STE Ser/Thr protein kinase family. STE20 subfamily. In terms of assembly, interacts tightly with GTP-bound but not GDP-bound Cdc42 and weakly with Rac1. Requires Mg(2+) as cofactor. In terms of processing, autophosphorylated when activated by Cdc42. As to expression, expressed in adult brain and eye. High levels detected in developing photoreceptor cells and future bristle cells, and lower levels in cone and pigment cells, as detected in third instar eye imaginal disks (at protein level).

The protein resides in the cell junction. It localises to the adherens junction. The protein localises to the cell membrane. The enzyme catalyses L-seryl-[protein] + ATP = O-phospho-L-seryl-[protein] + ADP + H(+). The catalysed reaction is L-threonyl-[protein] + ATP = O-phospho-L-threonyl-[protein] + ADP + H(+). Its function is as follows. Involved in neurogenesis of the adult central nervous system, and together with Cdc42, regulates photoreceptor cell morphogenesis. Phosphorylates exogenous substrates when activated by Cdc42. The chain is Serine/threonine-protein kinase PAK mbt from Drosophila melanogaster (Fruit fly).